A 282-amino-acid chain; its full sequence is Mitochondrial outer membrane protein porin (282 aa).

The protein belongs to the eukaryotic mitochondrial porin family.

It is found in the mitochondrion outer membrane. Its function is as follows. Forms a channel through the cell membrane that allows diffusion of small hydrophilic molecules. The channel adopts an open conformation at low or zero membrane potential and a closed conformation at potentials above 30-40 mV. The open state has a weak anion selectivity whereas the closed state is cation-selective. This is Mitochondrial outer membrane protein porin (POR1) from Candida albicans (strain SC5314 / ATCC MYA-2876) (Yeast).